The chain runs to 494 residues: MNATRKAARLRVLFATPECAPWAKTGGLGDVSASLPAALAALGLDVCVLLPGYPSVRQAARNARKVADIRSAHGLPSARLLRGRLPSGVPALVLDCPSLYRREGGPYQDGEGVDYTDNALRFGLLSHVAARLASAASPLVWRADILHCNDWPTALAPAYLKLGLPGAAPSLIVVHNLAFQGIFPLDVAERLGLPPESLKSEGVEYWGKLSFLKAGLYYADRIVAVSPTYAREIRTEAHGCGMQGLLETRANRLAGILNGIDMDAWNPRTDPHLDTNYDADTLEDKAPNKRALQAELGLAADDDALLLGMVTRLTDQKGIDLVLDALPELLARPVQLALLGGGDARFEQAWRQRAAARPDRIAAVIGFDERLAHRIEAGADAFVMPSRFEPCGLNQMYSQRYGTPPIVRATGGLVDSVGDFSVDGLHRGEASGFLFAEATPAALVEAVDRALKVFADRVAWRTLCCNGMARDFSWGGSAGRYARLYVAMRAAAAA.

Lys24 contributes to the ADP-alpha-D-glucose binding site.

It belongs to the glycosyltransferase 1 family. Bacterial/plant glycogen synthase subfamily.

It catalyses the reaction [(1-&gt;4)-alpha-D-glucosyl](n) + ADP-alpha-D-glucose = [(1-&gt;4)-alpha-D-glucosyl](n+1) + ADP + H(+). It participates in glycan biosynthesis; glycogen biosynthesis. In terms of biological role, synthesizes alpha-1,4-glucan chains using ADP-glucose. In Aromatoleum aromaticum (strain DSM 19018 / LMG 30748 / EbN1) (Azoarcus sp. (strain EbN1)), this protein is Glycogen synthase.